We begin with the raw amino-acid sequence, 341 residues long: GTPase Obg (341 aa).

One can recognise an Obg domain in the interval 1 to 159 (MKFLDQAKIY…RTIWLRLKLI (159 aa)). An OBG-type G domain is found at 160-327 (ADAGLVGLPN…TLRQLARIID (168 aa)). GTP is bound by residues 166–173 (GLPNAGKS), 191–195 (FTTLH), 212–215 (DIPG), 279–282 (SQVD), and 308–310 (SAV). 2 residues coordinate Mg(2+): Ser173 and Thr193.

This sequence belongs to the TRAFAC class OBG-HflX-like GTPase superfamily. OBG GTPase family. As to quaternary structure, monomer. The cofactor is Mg(2+).

It localises to the cytoplasm. In terms of biological role, an essential GTPase which binds GTP, GDP and possibly (p)ppGpp with moderate affinity, with high nucleotide exchange rates and a fairly low GTP hydrolysis rate. Plays a role in control of the cell cycle, stress response, ribosome biogenesis and in those bacteria that undergo differentiation, in morphogenesis control. The protein is GTPase Obg of Brucella abortus biovar 1 (strain 9-941).